The chain runs to 213 residues: Large ribosomal subunit protein eL14 (213 aa).

Lys79 is subject to N6-acetyllysine. Lys85 is subject to N6-acetyllysine; alternate. An N6-succinyllysine; alternate modification is found at Lys85. Residue Lys124 forms a Glycyl lysine isopeptide (Lys-Gly) (interchain with G-Cter in SUMO2) linkage. Position 139 is a phosphoserine (Ser139). A disordered region spans residues 166–213 (TAGKKAPAQKAPAQKAAGQKAAPPPKAQKVQKPPAQKAPAPKASGEKA). The 1-1; approximate repeat unit spans residues 169 to 173 (KKAPA). Residues 169-188 (KKAPAQKAPAQKAAGQKAAP) form a 4 X 5 AA tandem repeats of Q-K-A-[APS]-X region. 5 consecutive repeat copies span residues 174–178 (QKAPA), 179–183 (QKAAG), 184–188 (QKAAP), 191–193 (KAQ), and 194–196 (KVQ). The tract at residues 191-196 (KAQKVQ) is 2 X 3 AA tandem repeats of K-G-Q. Position 202 is an N6-succinyllysine (Lys202).

The protein belongs to the eukaryotic ribosomal protein eL14 family. In terms of assembly, component of the large ribosomal subunit.

The protein resides in the cytoplasm. Its function is as follows. Component of the large ribosomal subunit. The ribosome is a large ribonucleoprotein complex responsible for the synthesis of proteins in the cell. The protein is Large ribosomal subunit protein eL14 (RPL14) of Sus scrofa (Pig).